Here is a 262-residue protein sequence, read N- to C-terminus: Phosphatidylserine decarboxylase proenzyme (262 aa).

Residues Asp-86, His-142, and Ser-226 each act as charge relay system; for autoendoproteolytic cleavage activity in the active site. The active-site Schiff-base intermediate with substrate; via pyruvic acid; for decarboxylase activity is the Ser-226. Ser-226 carries the post-translational modification Pyruvic acid (Ser); by autocatalysis.

The protein belongs to the phosphatidylserine decarboxylase family. PSD-B subfamily. Prokaryotic type I sub-subfamily. In terms of assembly, heterodimer of a large membrane-associated beta subunit and a small pyruvoyl-containing alpha subunit. Pyruvate serves as cofactor. Post-translationally, is synthesized initially as an inactive proenzyme. Formation of the active enzyme involves a self-maturation process in which the active site pyruvoyl group is generated from an internal serine residue via an autocatalytic post-translational modification. Two non-identical subunits are generated from the proenzyme in this reaction, and the pyruvate is formed at the N-terminus of the alpha chain, which is derived from the carboxyl end of the proenzyme. The autoendoproteolytic cleavage occurs by a canonical serine protease mechanism, in which the side chain hydroxyl group of the serine supplies its oxygen atom to form the C-terminus of the beta chain, while the remainder of the serine residue undergoes an oxidative deamination to produce ammonia and the pyruvoyl prosthetic group on the alpha chain. During this reaction, the Ser that is part of the protease active site of the proenzyme becomes the pyruvoyl prosthetic group, which constitutes an essential element of the active site of the mature decarboxylase.

It localises to the cell membrane. It catalyses the reaction a 1,2-diacyl-sn-glycero-3-phospho-L-serine + H(+) = a 1,2-diacyl-sn-glycero-3-phosphoethanolamine + CO2. It participates in phospholipid metabolism; phosphatidylethanolamine biosynthesis; phosphatidylethanolamine from CDP-diacylglycerol: step 2/2. Functionally, catalyzes the formation of phosphatidylethanolamine (PtdEtn) from phosphatidylserine (PtdSer). In Bacillus cereus (strain ZK / E33L), this protein is Phosphatidylserine decarboxylase proenzyme.